The chain runs to 28 residues: Humanin-like 4 (28 aa).

The protein belongs to the humanin family. Highly expressed in testis. Also expressed in kidney, heart, skeletal muscles and brain.

Its subcellular location is the secreted. It localises to the cytoplasm. In terms of biological role, plays a role as a neuroprotective and antiapoptotic factor. This is Humanin-like 4 from Homo sapiens (Human).